The sequence spans 519 residues: Membrane-bound glycerophospholipid O-acyltransferase 2 (519 aa).

6 helical membrane-spanning segments follow: residues 22 to 42 (PIDQ…AVWF), 61 to 81 (TLLG…HFLV), 88 to 108 (CIMI…FALG), 184 to 204 (FMGI…FIEG), 236 to 256 (LLVC…LPVE), and 263 to 283 (FQAT…LLAA). Residues N341 and H372 contribute to the active site. 3 helical membrane-spanning segments follow: residues 365–385 (FFLS…FLTG), 415–435 (LITW…FVLL), and 443–463 (FYSS…LLLP). A disordered region spans residues 497–519 (FSTMNNVCNQNRDTGSRHSSLTQ).

This sequence belongs to the membrane-bound acyltransferase family. As to expression, highly expressed in epididymis, brain, testis, and ovary.

It is found in the endoplasmic reticulum membrane. It carries out the reaction a 1-acyl-sn-glycero-3-phosphocholine + an acyl-CoA = a 1,2-diacyl-sn-glycero-3-phosphocholine + CoA. It catalyses the reaction a 1-acyl-sn-glycero-3-phosphoethanolamine + an acyl-CoA = a 1,2-diacyl-sn-glycero-3-phosphoethanolamine + CoA. The enzyme catalyses a 1-O-(1Z-alkenyl)-sn-glycero-3-phosphocholine + (9Z)-octadecenoyl-CoA = 1-O-(1Z)-alkenyl-2-(9Z)-octadecenoyl-sn-glycero-3-phosphocholine + CoA. The catalysed reaction is a 1-O-(1Z-alkenyl)-sn-glycero-3-phosphoethanolamine + (9Z)-octadecenoyl-CoA = 1-O-(1Z)-alkenyl-2-(9Z)-octadecenoyl-sn-glycero-3-phosphoethanolamine + CoA. It carries out the reaction 1-octadecanoyl-sn-glycero-3-phosphoethanolamine + (9Z)-octadecenoyl-CoA = 1-octadecanoyl-2-(9Z-octadecenoyl)-sn-glycero-3-phosphoethanolamine + CoA. It catalyses the reaction 1-octadecanoyl-sn-glycero-3-phosphocholine + (9Z)-octadecenoyl-CoA = 1-octadecanoyl-2-(9Z-octadecenoyl)-sn-glycero-3-phosphocholine + CoA. The enzyme catalyses 1-(9Z-octadecenoyl)-sn-glycero-3-phosphoethanolamine + (9Z)-octadecenoyl-CoA = 1,2-di-(9Z-octadecenoyl)-sn-glycero-3-phosphoethanolamine + CoA. The catalysed reaction is 1-hexadecanoyl-sn-glycero-3-phosphoethanolamine + (9Z)-octadecenoyl-CoA = 1-hexadecanoyl-2-(9Z-octadecenoyl)-sn-glycero-3-phosphoethanolamine + CoA. It carries out the reaction 1-hexadecanoyl-sn-glycero-3-phosphocholine + (9Z)-octadecenoyl-CoA = 1-hexadecanoyl-2-(9Z-octadecenoyl)-sn-glycero-3-phosphocholine + CoA. It catalyses the reaction (9Z)-hexadecenoyl-CoA + 1-hexadecanoyl-sn-glycero-3-phosphocholine = 1-hexadecanoyl-2-(9Z-hexadecenoyl)-sn-glycero-3-phosphocholine + CoA. The enzyme catalyses 1-hexadecanoyl-sn-glycero-3-phosphoethanolamine + (9Z)-hexadecenoyl-CoA = 1-hexadecanoyl-2-(9Z)-hexadecenoyl-sn-glycero-3-phosphoethanolamine + CoA. The catalysed reaction is (9Z,12Z)-octadecadienoyl-CoA + 1-hexadecanoyl-sn-glycero-3-phosphocholine = 1-hexadecanoyl-2-(9Z,12Z-octadecadienoyl)-sn-glycero-3-phosphocholine + CoA. The protein operates within lipid metabolism; phospholipid metabolism. Partially inhibited by thimerosal. Acyltransferase which catalyzes the transfer of an acyl group from an acyl-CoA to a lysophospholipid leading to the production of a phospholipid and participates in the reacylation step of the phospholipid remodeling pathway also known as the Lands cycle. Catalyzes the acylation of lysophosphatidylcholine (1-acyl-sn-glycero-3-phosphocholine or LPC) and to a lesser extend lysophosphatidylethanolamine (1-acyl-sn-glycero-3-phosphoethanolamine or LPE). Does not acylates lysophosphatidic acid (LPA) and lysophosphatidylserine. Prefers oleoyl-CoA as the acyl donor. May be involved in chondrocyte differentiation. This is Membrane-bound glycerophospholipid O-acyltransferase 2 from Mus musculus (Mouse).